The following is a 700-amino-acid chain: ATP-dependent zinc metalloprotease FtsH (700 aa).

Residues 1–10 (MNNNKGGFLR) are Cytoplasmic-facing. A helical transmembrane segment spans residues 11-31 (SSVFYIFIFLAVVGMVYGLFG). The Extracellular segment spans residues 32–130 (NDKTTTKTIT…LVTKQAENSG (99 aa)). A helical membrane pass occupies residues 131–151 (FWLNLLVSLVPVLLIVAVFYL). Topologically, residues 152-700 (MMNQAGGGKG…ETDDNNTENK (549 aa)) are cytoplasmic. 227–234 (GPPGTGKT) contributes to the ATP binding site. Histidine 449 provides a ligand contact to Zn(2+). Glutamate 450 is a catalytic residue. Histidine 453 and aspartate 525 together coordinate Zn(2+). The segment at 644–700 (KSFEEAKAAADAKDSQAEQRFEKQDEEKSSDDHSESKNEDTDSTDKSETDDNNTENK) is disordered.

The protein in the central section; belongs to the AAA ATPase family. This sequence in the C-terminal section; belongs to the peptidase M41 family. In terms of assembly, homohexamer. Zn(2+) serves as cofactor.

It localises to the cell membrane. In terms of biological role, acts as a processive, ATP-dependent zinc metallopeptidase for both cytoplasmic and membrane proteins. Plays a role in the quality control of integral membrane proteins. The protein is ATP-dependent zinc metalloprotease FtsH of Leuconostoc mesenteroides subsp. mesenteroides (strain ATCC 8293 / DSM 20343 / BCRC 11652 / CCM 1803 / JCM 6124 / NCDO 523 / NBRC 100496 / NCIMB 8023 / NCTC 12954 / NRRL B-1118 / 37Y).